The primary structure comprises 147 residues: Methylmalonyl-CoA mutase homolog (147 aa).

To methylmalonyl-CoA mutase.

The protein is Methylmalonyl-CoA mutase homolog of Alkalihalophilus pseudofirmus (strain ATCC BAA-2126 / JCM 17055 / OF4) (Bacillus pseudofirmus).